The following is a 261-amino-acid chain: Putative outer membrane protein TC_0650 (261 aa).

A signal peptide spans 1 to 17 (MRFLFAFILLCSPWVSE).

It is found in the cell outer membrane. This Chlamydia muridarum (strain MoPn / Nigg) protein is Putative outer membrane protein TC_0650.